We begin with the raw amino-acid sequence, 117 residues long: Immunoglobulin heavy variable 1-3 (117 aa).

A signal peptide spans 1 to 19 (MDWTWRILFLVAAATGAHS). A framework-1 region spans residues 20-44 (QVQLVQSGAEVKKPGASVKVSCKAS). Positions 20 to 117 (QVQLVQSGAE…EDTAVYYCAR (98 aa)) constitute an Ig-like domain. Residues Cys41 and Cys115 are joined by a disulfide bond. The complementarity-determining-1 stretch occupies residues 45–52 (GYTFTSYA). Positions 53–69 (MHWVRQAPGQRLEWMGW) are framework-2. A complementarity-determining-2 region spans residues 70–77 (INAGNGNT). A framework-3 region spans residues 78-115 (KYSQKFQGRVTITRDTSASTAYMELSSLRSEDTAVYYC). Positions 116-117 (AR) are complementarity-determining-3.

As to quaternary structure, immunoglobulins are composed of two identical heavy chains and two identical light chains; disulfide-linked.

The protein resides in the secreted. It is found in the cell membrane. V region of the variable domain of immunoglobulin heavy chains that participates in the antigen recognition. Immunoglobulins, also known as antibodies, are membrane-bound or secreted glycoproteins produced by B lymphocytes. In the recognition phase of humoral immunity, the membrane-bound immunoglobulins serve as receptors which, upon binding of a specific antigen, trigger the clonal expansion and differentiation of B lymphocytes into immunoglobulins-secreting plasma cells. Secreted immunoglobulins mediate the effector phase of humoral immunity, which results in the elimination of bound antigens. The antigen binding site is formed by the variable domain of one heavy chain, together with that of its associated light chain. Thus, each immunoglobulin has two antigen binding sites with remarkable affinity for a particular antigen. The variable domains are assembled by a process called V-(D)-J rearrangement and can then be subjected to somatic hypermutations which, after exposure to antigen and selection, allow affinity maturation for a particular antigen. The chain is Immunoglobulin heavy variable 1-3 from Homo sapiens (Human).